The sequence spans 312 residues: Methionyl-tRNA formyltransferase (312 aa).

Residue 113–116 (SLLP) coordinates (6S)-5,6,7,8-tetrahydrofolate.

Belongs to the Fmt family.

The enzyme catalyses L-methionyl-tRNA(fMet) + (6R)-10-formyltetrahydrofolate = N-formyl-L-methionyl-tRNA(fMet) + (6S)-5,6,7,8-tetrahydrofolate + H(+). Functionally, attaches a formyl group to the free amino group of methionyl-tRNA(fMet). The formyl group appears to play a dual role in the initiator identity of N-formylmethionyl-tRNA by promoting its recognition by IF2 and preventing the misappropriation of this tRNA by the elongation apparatus. The chain is Methionyl-tRNA formyltransferase from Francisella philomiragia subsp. philomiragia (strain ATCC 25017 / CCUG 19701 / FSC 153 / O#319-036).